A 370-amino-acid polypeptide reads, in one-letter code: Notoamide biosynthesis cluster protein J (370 aa).

The N-terminal stretch at 1–22 (MRIMSIMLHLLATILLSSAVSA) is a signal peptide. 7 N-linked (GlcNAc...) asparagine glycosylation sites follow: Asn159, Asn167, Asn192, Asn235, Asn282, Asn340, and Asn346.

Functionally, part of the gene cluster that mediates the biosynthesis of notoamide, a fungal indole alkaloid that belongs to a family of natural products containing a characteristic bicyclo[2.2.2]diazaoctane core. The first step of notoamide biosynthesis involves coupling of L-proline and L-tryptophan by the bimodular NRPS notE, to produce cyclo-L-tryptophan-L-proline called brevianamide F. The reverse prenyltransferase notF then acts as a deoxybrevianamide E synthase and converts brevianamide F to deoxybrevianamide E via reverse prenylation at C-2 of the indole ring leading to the bicyclo[2.2.2]diazaoctane core. Deoxybrevianamide E is further hydroxylated at C-6 of the indole ring, likely catalyzed by the cytochrome P450 monooxygenase notG, to yield 6-hydroxy-deoxybrevianamide E. 6-hydroxy-deoxybrevianamide E is a specific substrate of the prenyltransferase notC for normal prenylation at C-7 to produce 6-hydroxy-7-prenyl-deoxybrevianamide, also called notoamide S. As the proposed pivotal branching point in notoamide biosynthesis, notoamide S can be diverted to notoamide E through an oxidative pyran ring closure putatively catalyzed by either notH cytochrome P450 monooxygenase or the notD FAD-linked oxidoreductase. This step would be followed by an indole 2,3-epoxidation-initiated pinacol-like rearrangement catalyzed by the notB FAD-dependent monooxygenase leading to the formation of notoamide C and notoamide D. On the other hand notoamide S is converted to notoamide T by notH (or notD), a bifunctional oxidase that also functions as the intramolecular Diels-Alderase responsible for generation of (+)-notoamide T. To generate antipodal (-)-notoaminide T, notH' (or notD') in Aspergillus versicolor is expected to catalyze a Diels-Alder reaction leading to the opposite stereochemistry. The remaining oxidoreductase notD (or notH) likely catalyzes the oxidative pyran ring formation to yield (+)-stephacidin A. The FAD-dependent monooxygenase notI is highly similar to notB and is predicted to catalyze a similar conversion from (+)-stephacidin A to (-)-notoamide B via the 2,3-epoxidation of (+)-stephacidin A followed by a pinacol-type rearrangement. Finally, it remains unclear which enzyme could be responsible for the final hydroxylation steps leading to notoamide A and sclerotiamide. The function of notJ in the notoamide biosynthesis has not been determined yet. This is Notoamide biosynthesis cluster protein J from Aspergillus sp. (strain MF297-2).